The sequence spans 149 residues: Large ribosomal subunit protein bL9 (149 aa).

It belongs to the bacterial ribosomal protein bL9 family.

Its function is as follows. Binds to the 23S rRNA. The sequence is that of Large ribosomal subunit protein bL9 from Glaesserella parasuis serovar 5 (strain SH0165) (Haemophilus parasuis).